Consider the following 180-residue polypeptide: ATP-dependent protease subunit HslV (180 aa).

Threonine 7 is an active-site residue. The Na(+) site is built by glycine 165, cysteine 168, and threonine 171.

It belongs to the peptidase T1B family. HslV subfamily. A double ring-shaped homohexamer of HslV is capped on each side by a ring-shaped HslU homohexamer. The assembly of the HslU/HslV complex is dependent on binding of ATP.

Its subcellular location is the cytoplasm. The enzyme catalyses ATP-dependent cleavage of peptide bonds with broad specificity.. With respect to regulation, allosterically activated by HslU binding. Its function is as follows. Protease subunit of a proteasome-like degradation complex believed to be a general protein degrading machinery. This is ATP-dependent protease subunit HslV from Bacillus cereus (strain ATCC 10987 / NRS 248).